Reading from the N-terminus, the 417-residue chain is Serine--tRNA ligase (417 aa).

Residue 225-227 coordinates L-serine; sequence TLE. 256 to 258 contributes to the ATP binding site; it reads RQE. Glutamate 279 contributes to the L-serine binding site. Residue 343–346 participates in ATP binding; sequence EVSS. Position 379 (threonine 379) interacts with L-serine.

It belongs to the class-II aminoacyl-tRNA synthetase family. Type-1 seryl-tRNA synthetase subfamily. In terms of assembly, homodimer. The tRNA molecule binds across the dimer.

Its subcellular location is the cytoplasm. The enzyme catalyses tRNA(Ser) + L-serine + ATP = L-seryl-tRNA(Ser) + AMP + diphosphate + H(+). It carries out the reaction tRNA(Sec) + L-serine + ATP = L-seryl-tRNA(Sec) + AMP + diphosphate + H(+). It functions in the pathway aminoacyl-tRNA biosynthesis; selenocysteinyl-tRNA(Sec) biosynthesis; L-seryl-tRNA(Sec) from L-serine and tRNA(Sec): step 1/1. Its function is as follows. Catalyzes the attachment of serine to tRNA(Ser). Is also able to aminoacylate tRNA(Sec) with serine, to form the misacylated tRNA L-seryl-tRNA(Sec), which will be further converted into selenocysteinyl-tRNA(Sec). The polypeptide is Serine--tRNA ligase (Mycoplasma genitalium (strain ATCC 33530 / DSM 19775 / NCTC 10195 / G37) (Mycoplasmoides genitalium)).